The sequence spans 20 residues: TRTPVNVTVTGAAGQIGYAL.

Position 11–17 (11–17 (GAAGQIG)) interacts with NAD(+).

This sequence belongs to the LDH/MDH superfamily. MDH type 2 family.

The catalysed reaction is (S)-malate + NAD(+) = oxaloacetate + NADH + H(+). Its function is as follows. Catalyzes the reversible oxidation of malate to oxaloacetate. The protein is Malate dehydrogenase (mdh) of Kibdelosporangium aridum.